The chain runs to 286 residues: Polyamine aminopropyltransferase (286 aa).

The PABS domain occupies 5–238 (TMWHETLHDQ…GIMTFAWATD (234 aa)). Position 33 (Q33) interacts with S-methyl-5'-thioadenosine. Spermidine is bound by residues H64 and D88. S-methyl-5'-thioadenosine is bound by residues E108 and 140–141 (DG). D158 acts as the Proton acceptor in catalysis. Position 158–161 (158–161 (DCTD)) interacts with spermidine. S-methyl-5'-thioadenosine is bound at residue P165.

It belongs to the spermidine/spermine synthase family. As to quaternary structure, homodimer or homotetramer.

It is found in the cytoplasm. It catalyses the reaction S-adenosyl 3-(methylsulfanyl)propylamine + putrescine = S-methyl-5'-thioadenosine + spermidine + H(+). It participates in amine and polyamine biosynthesis; spermidine biosynthesis; spermidine from putrescine: step 1/1. Its function is as follows. Catalyzes the irreversible transfer of a propylamine group from the amino donor S-adenosylmethioninamine (decarboxy-AdoMet) to putrescine (1,4-diaminobutane) to yield spermidine. In Salmonella arizonae (strain ATCC BAA-731 / CDC346-86 / RSK2980), this protein is Polyamine aminopropyltransferase.